Here is a 32-residue protein sequence, read N- to C-terminus: Photosystem II reaction center protein Z (32 aa).

Residues I12–I32 traverse the membrane as a helical segment.

Belongs to the PsbZ family. As to quaternary structure, PSII is composed of 1 copy each of membrane proteins PsbA, PsbB, PsbC, PsbD, PsbE, PsbF, PsbH, PsbI, PsbJ, PsbK, PsbL, PsbM, PsbT, PsbY, PsbZ, Psb30/Ycf12, at least 3 peripheral proteins of the oxygen-evolving complex and a large number of cofactors. It forms dimeric complexes.

It is found in the plastid. Its subcellular location is the chloroplast thylakoid membrane. May control the interaction of photosystem II (PSII) cores with the light-harvesting antenna, regulates electron flow through the 2 photosystem reaction centers. PSII is a light-driven water plastoquinone oxidoreductase, using light energy to abstract electrons from H(2)O, generating a proton gradient subsequently used for ATP formation. This chain is Photosystem II reaction center protein Z, found in Euglena anabaena (Euglenaria anabaena).